A 396-amino-acid chain; its full sequence is 3-amino-4-hydroxybenzoate 2-monooxygenase PtnB3 (396 aa).

Residues A19, 38–39 (EQ), and R112 each bind FAD. The active-site Proton acceptor is Y217. D295 is an FAD binding site.

This sequence belongs to the 6-hydroxynicotinate 3-monooxygenase family. FAD is required as a cofactor.

The enzyme catalyses 3-amino-4-hydroxybenzoate + NADPH + O2 + H(+) = 3-amino-2,4-dihydroxybenzoate + NADP(+) + H2O. It functions in the pathway antibiotic biosynthesis. Functionally, part of a gene cluster involved in the biosynthesis of thioplatencin (ThioPTN) and platencin (PTN), potent and selective inhibitors of bacterial and mammalian fatty acid synthases. Catalyzes the hydroxylation of 3-amino-4-hydroxybenzoate (3,4-AHBA) to 3-amino-2,4-dihydroxybenzoate (3,2,4-ADHBA). The protein is 3-amino-4-hydroxybenzoate 2-monooxygenase PtnB3 of Streptomyces platensis.